Here is a 379-residue protein sequence, read N- to C-terminus: Homoserine O-succinyltransferase (379 aa).

In terms of domain architecture, AB hydrolase-1 spans 51 to 360 (NAVLICHALS…DAPQGHDAFL (310 aa)). Ser-157 serves as the catalytic Nucleophile. A substrate-binding site is contributed by Arg-227. Active-site residues include Asp-323 and His-356. Residue Asp-357 participates in substrate binding.

Belongs to the AB hydrolase superfamily. MetX family. Homodimer.

Its subcellular location is the cytoplasm. The enzyme catalyses L-homoserine + succinyl-CoA = O-succinyl-L-homoserine + CoA. The protein operates within amino-acid biosynthesis; L-methionine biosynthesis via de novo pathway; O-succinyl-L-homoserine from L-homoserine: step 1/1. In terms of biological role, transfers a succinyl group from succinyl-CoA to L-homoserine, forming succinyl-L-homoserine. This is Homoserine O-succinyltransferase from Stutzerimonas stutzeri (strain A1501) (Pseudomonas stutzeri).